A 142-amino-acid chain; its full sequence is MRFFVPLFLVGILFPAILAKQFTKCELSQLLKDIDGYGGIALPELICTMFHTSGYDTQAIVENNESTEYGLFQISNKLWCKSSQVPQSRNICDISCDKFLDDDITDDIMCAKKILDIKGIDYWLAHKALCTEKLEQWLCEKL.

An N-terminal signal peptide occupies residues 1–19 (MRFFVPLFLVGILFPAILA). In terms of domain architecture, C-type lysozyme spans 20-142 (KQFTKCELSQ…KLEQWLCEKL (123 aa)). Cystine bridges form between Cys25–Cys139, Cys47–Cys130, Cys80–Cys96, and Cys92–Cys110. Ca(2+) is bound by residues Thr57 and Gln58. Asn64 carries an N-linked (GlcNAc...) asparagine glycan. Zn(2+) is bound at residue Glu68. Asn90 carries an N-linked (GlcNAc...) asparagine; atypical; partial glycan. The Ca(2+) site is built by Lys98, Leu100, Asp101, Asp102, Asp103, Asp106, and Asp107. Glu135 is a binding site for Zn(2+).

Belongs to the glycosyl hydrolase 22 family. Lactose synthase (LS) is a heterodimer of a catalytic component, beta1,4-galactosyltransferase (beta4Gal-T1) and a regulatory component, alpha-lactalbumin (LA). In terms of tissue distribution, mammary gland specific. Secreted in milk.

The protein localises to the secreted. Functionally, regulatory subunit of lactose synthase, changes the substrate specificity of galactosyltransferase in the mammary gland making glucose a good acceptor substrate for this enzyme. This enables LS to synthesize lactose, the major carbohydrate component of milk. In other tissues, galactosyltransferase transfers galactose onto the N-acetylglucosamine of the oligosaccharide chains in glycoproteins. The sequence is that of Alpha-lactalbumin (LALBA) from Homo sapiens (Human).